The chain runs to 110 residues: Endoribonuclease SymE (110 aa).

The region spanning 29-74 (SSYPEYTRIPAITLKGQWLEDAGFTTGTQVDVRVMNGCIVLTAQQP) is the SpoVT-AbrB domain.

Belongs to the SymE family.

The protein localises to the cytoplasm. Its function is as follows. Involved in the degradation and recycling of damaged RNA. It is itself a target for degradation by the ATP-dependent protease Lon. The polypeptide is Endoribonuclease SymE (Salmonella choleraesuis (strain SC-B67)).